The sequence spans 353 residues: C-X-C chemokine receptor type 4 (353 aa).

Residues 1-22 (MEELHIYPSDNYTEEDLGSGDY) are important for chemokine binding and signaling. Residues 1 to 39 (MEELHIYPSDNYTEEDLGSGDYDSMKEPCFREENAHFNR) are Extracellular-facing. Tyr-7 is subject to Sulfotyrosine. The N-linked (GlcNAc...) asparagine glycan is linked to Asn-11. Position 12 is a sulfotyrosine (Tyr-12). O-linked (Xyl...) (chondroitin sulfate) serine glycosylation occurs at Ser-19. Tyr-22 is modified (sulfotyrosine). 2 disulfide bridges follow: Cys-29–Cys-275 and Cys-110–Cys-187. A helical transmembrane segment spans residues 40–64 (IFLPTVYSIIFLTGIVGNGLVILVM). Over 65–78 (GYQKKLRSMTDKYR) the chain is Cytoplasmic. A helical transmembrane segment spans residues 79–100 (LHLSVADLLFVLTLPFWAVEAV). The chemokine binding stretch occupies residues 95 to 98 (WAVE). Residues 101–111 (ANWYFGNFLCK) lie on the Extracellular side of the membrane. Residues 112–131 (AVHVIYTVNLYSSVLILAFI) traverse the membrane as a helical segment. Positions 114–118 (HVIYT) are chemokine binding. Residues 132-155 (SLDRYLAIVHATNSQRPRKLLAEK) lie on the Cytoplasmic side of the membrane. Positions 134-136 (DRY) match the Important for signaling motif. The segment at 136-148 (YLAIVHATNSQRP) is involved in dimerization; when bound to chemokine. A helical transmembrane segment spans residues 156 to 175 (VVYVGVWIPALLLTIPDFIF). Over 176 to 196 (ANVREADDRYICDRFYPNDSW) the chain is Extracellular. The segment at 187–191 (CDRFY) is chemokine binding, important for signaling. The involved in dimerization stretch occupies residues 192–211 (PNDSWLVVFQFQHIMVGLIL). Residues 197-217 (LVVFQFQHIMVGLILPGIVIL) form a helical membrane-spanning segment. At 218 to 242 (SCYCIIISKLSHSKGYQKRKALKTT) the chain is on the cytoplasmic side. A helical membrane pass occupies residues 243 to 262 (VILILAFFACWLPYYIGISI). Topologically, residues 263-283 (DSFILLEIIKQGCEFEKTVHK) are extracellular. An involved in dimerization region spans residues 267–269 (LLE). The helical transmembrane segment at 284–303 (WISITEALAFFHCCLNPILY) threads the bilayer. At 304-353 (AFLGAKFKTSAQHALTSVSRGSSLKILSKGKRGGHSSVSTESESSSFHSS) the chain is on the cytoplasmic side. Phosphoserine occurs at positions 320 and 322. Phosphoserine; by PKC and GRK6 occurs at positions 325 and 326. The interval 330–353 (LSKGKRGGHSSVSTESESSSFHSS) is disordered. Ser-331 carries the phosphoserine; by GRK6 modification. Lys-332 is covalently cross-linked (Glycyl lysine isopeptide (Lys-Gly) (interchain with G-Cter in ubiquitin)). Residues 338–353 (HSSVSTESESSSFHSS) show a composition bias toward low complexity. At Ser-340 the chain carries Phosphoserine; by GRK6. Residues Ser-349 and Ser-352 each carry the phosphoserine modification.

It belongs to the G-protein coupled receptor 1 family. As to quaternary structure, monomer. Can form homodimers. Interacts with CD164. Interacts with ARRB2; the interaction is dependent on the C-terminal phosphorylation of CXCR4 and allows activation of MAPK1 and MAPK3. Interacts with ARR3; the interaction is dependent on the C-terminal phosphorylation of CXCR4 and modulates calcium mobilization. Interacts with RNF113A; the interaction, enhanced by CXCL12, promotes CXCR4 ubiquitination and subsequent degradation. Interacts (via the cytoplasmic C-terminal) with ITCH (via the WW domains I and II); the interaction, enhanced by CXCL12, promotes CXCR4 ubiquitination and leads to its degradation. Interacts with extracellular ubiquitin. Interacts with DBN1; this interaction is enhanced by antigenic stimulation. Following LPS binding, may form a complex with GDF5, HSP90AA1 and HSPA8. In terms of processing, phosphorylated on agonist stimulation. Rapidly phosphorylated on serine and threonine residues in the C-terminal. Phosphorylation at Ser-325 and Ser-326 leads to recruitment of ITCH, ubiquitination and protein degradation. Post-translationally, ubiquitinated after ligand binding, leading to its degradation. Ubiquitinated by ITCH at the cell membrane on agonist stimulation. The ubiquitin-dependent mechanism, endosomal sorting complex required for transport (ESCRT), then targets CXCR4 for lysosomal degradation. This process is dependent also on prior Ser-/Thr-phosphorylation in the C-terminal of CXCR4. Also binding of ARRB1 to STAM negatively regulates CXCR4 sorting to lysosomes though modulating ubiquitination of SFR5S. Sulfation is required for efficient binding of CXCL12/SDF-1alpha and promotes its dimerization. In terms of processing, O- and N-glycosylated. N-glycosylation can mask coreceptor function. The O-glycosylation chondroitin sulfate attachment does not affect interaction with CXCL12/SDF-1alpha nor its coreceptor activity.

The protein localises to the cell membrane. The protein resides in the cell junction. Its subcellular location is the early endosome. It localises to the late endosome. It is found in the lysosome. Its function is as follows. Receptor for the C-X-C chemokine CXCL12/SDF-1 that transduces a signal by increasing intracellular calcium ion levels and enhancing MAPK1/MAPK3 activation. Involved in the AKT signaling cascade. Plays a role in regulation of cell migration, e.g. during wound healing. Acts as a receptor for extracellular ubiquitin; leading to enhanced intracellular calcium ions and reduced cellular cAMP levels. Binds bacterial lipopolysaccharide (LPS) et mediates LPS-induced inflammatory response, including TNF secretion by monocytes. Involved in hematopoiesis and in cardiac ventricular septum formation. Also plays an essential role in vascularization of the gastrointestinal tract, probably by regulating vascular branching and/or remodeling processes in endothelial cells. Involved in cerebellar development. In the CNS, could mediate hippocampal-neuron survival. The chain is C-X-C chemokine receptor type 4 (CXCR4) from Canis lupus familiaris (Dog).